Reading from the N-terminus, the 232-residue chain is Acyl-protein thioesterase 1 (232 aa).

Catalysis depends on charge relay system residues S125, D179, and H212.

Belongs to the AB hydrolase superfamily. AB hydrolase 2 family.

The protein resides in the cytoplasm. The protein localises to the nucleus. The catalysed reaction is S-hexadecanoyl-L-cysteinyl-[protein] + H2O = L-cysteinyl-[protein] + hexadecanoate + H(+). Functionally, hydrolyzes fatty acids from S-acylated cysteine residues in proteins with a strong preference for palmitoylated G-alpha proteins over other acyl substrates. Mediates the deacylation of G-alpha proteins such as GPA1 in vivo, but has weak or no activity toward palmitoylated Ras proteins. Has weak lysophospholipase activity in vitro; however such activity may not exist in vivo. The sequence is that of Acyl-protein thioesterase 1 from Debaryomyces hansenii (strain ATCC 36239 / CBS 767 / BCRC 21394 / JCM 1990 / NBRC 0083 / IGC 2968) (Yeast).